Here is a 166-residue protein sequence, read N- to C-terminus: MFPMVTEFMNYGQQTVRAARYIGQGFMITLSHANRLPVTIQYPYEKLITSERFRGRIHFEFDKCIACEVCVRVCPIDLPVVDWKLETDIRKKRLLNYSIDFGICIFCGNCVEYCPTNCLSMTEEYELSTYDRHELNYNQIALGRLPMSIIDDYTIRTILNLPEIKI.

2 4Fe-4S ferredoxin-type domains span residues 55 to 84 (GRIH…VDWK) and 95 to 124 (LNYS…MTEE). Residues C64, C67, C70, C74, C104, C107, C110, and C114 each coordinate [4Fe-4S] cluster.

This sequence belongs to the complex I 23 kDa subunit family. In terms of assembly, NDH is composed of at least 16 different subunits, 5 of which are encoded in the nucleus. [4Fe-4S] cluster is required as a cofactor.

Its subcellular location is the plastid. It localises to the chloroplast thylakoid membrane. The enzyme catalyses a plastoquinone + NADH + (n+1) H(+)(in) = a plastoquinol + NAD(+) + n H(+)(out). It catalyses the reaction a plastoquinone + NADPH + (n+1) H(+)(in) = a plastoquinol + NADP(+) + n H(+)(out). Functionally, NDH shuttles electrons from NAD(P)H:plastoquinone, via FMN and iron-sulfur (Fe-S) centers, to quinones in the photosynthetic chain and possibly in a chloroplast respiratory chain. The immediate electron acceptor for the enzyme in this species is believed to be plastoquinone. Couples the redox reaction to proton translocation, and thus conserves the redox energy in a proton gradient. The sequence is that of NAD(P)H-quinone oxidoreductase subunit I, chloroplastic from Espeletia timotensis (Andean giant rosette).